The chain runs to 147 residues: Phospholipase A2 inhibitor subunit A (147 aa).

The region spanning glutamate 62–phenylalanine 143 is the C-type lectin domain. 2 disulfides stabilise this stretch: cysteine 64–cysteine 141 and cysteine 119–cysteine 133. Asparagine 103 carries an N-linked (GlcNAc...) asparagine glycan.

It belongs to the alpha-type phospholipase A2 inhibitor family. As to quaternary structure, homo- or heterotrimer; homotrimer of PLI-A chains, two PLI-A and one PLI-B chains, one PLI-A and two PLI-B chains, and homotrimer of PLI-B chains (with a ratio of 1:3:3:1). As to expression, expressed by the liver.

The protein resides in the secreted. PLI binds directly phospholipase A2 in the presence or absence of calcium. Inhibitory activity of the PLI-A homotrimer is more specific than that of the PLI-B homotrimer. The protein is Phospholipase A2 inhibitor subunit A of Protobothrops flavoviridis (Habu).